The sequence spans 717 residues: MMENLLANCVQKNLNHFMFTNAIFLCELLLAQFPSEVNLQLLARCYLSNSQAYSAYYILKGSKTPQSRYLFAFSCFKLDLLGEAEAALLPCEDYAEEVPGGAAGHYLLGLIYRYSGRKNCSIQQFRMALSFDPLCWEAYGELCSLGAAEEASTVFGNVASQRLQKTCVEQRISFSEGATIDQITDSDKALKDTGLSQTEHIPGENQQDLKIMQQPGDIPPNTDRQLSTNGWDLNTPSPVLLQVMDALPPLLLKNMRRPAVEGSLMSVHGVRVRRRNFFSEELSAEAQEESGRRRSARIAARKKNPMSQSFGKDSHWLHLSPSESNYAPSLSSMIGKCRIQSSKEATTSGQSVSDIGSSVDDEEKSNPSESSPDRFSLISGISEVLSLLKILGDGHRHLHMYKCQEALLAYQKLSQKQYNTHWVLMQVGKAYFELQDYFNADSSFTLAHQKYPYALEGMDTYSTVLYHLKEEMRLGYLAQELISVDRLSPESWCAVGNCYSLRKDHDTALKMFQRAIQLNERFTYAHTLCGHEFAALEEFEDAERCYRKALGIDTRHYNAWYGLGMTYLRQEKFEFAQHQFQLALQINPRSSVIMCYYGIALHESKRNDEALMMMEKAVLTDAKNPLPKYYKAHILTSLGDYHKAQKVLEELKECAPQESSVHASLGKIYNQLKQYDKAVLHFGIALDLSPSPSDAVKIKAYMERLILPDELVTEENL.

Residues 198-208 (TEHIPGENQQD) show a composition bias toward polar residues. Disordered stretches follow at residues 198 to 217 (TEHI…QPGD), 282 to 315 (LSAE…KDSH), and 342 to 374 (SKEA…SPDR). The span at 293–304 (RRSARIAARKKN) shows a compositional bias: basic residues. Polar residues predominate over residues 342 to 356 (SKEATTSGQSVSDIG). 7 TPR repeats span residues 421-454 (HWVL…YPYA), 489-522 (PESW…NERF), 524-556 (YAHT…DTRH), 557-590 (YNAW…NPRS), 592-624 (VIMC…DAKN), 625-658 (PLPK…APQE), and 659-692 (SSVH…SPSP).

It belongs to the APC3/CDC27 family. The APC/C is composed of at least 10 subunits. Interacts with APC2 and APC10.

It localises to the nucleus. The protein operates within protein modification; protein ubiquitination. Its function is as follows. Component of the anaphase promoting complex/cyclosome (APC/C), a cell cycle-regulated E3 ubiquitin-protein ligase complex that controls progression through mitosis and the G1 phase of the cell cycle. The APC/C complex controls several key steps in the cell cycle by mediating ubiquitination and subsequent degradation of target proteins such as cyclins. The APC/C complex is required for the female gametophyte development and is involved in several aspect of development by controlling cell division and cell elongation. Involved in the control of endoreduplication. Functionally redundant with CDC27B in the control of gametophyte development. In Arabidopsis thaliana (Mouse-ear cress), this protein is Cell division cycle protein 27 homolog A (CDC27A).